Here is a 230-residue protein sequence, read N- to C-terminus: Androgen-dependent TFPI-regulating protein (230 aa).

The Cytoplasmic portion of the chain corresponds to 1–3 (MTK). The chain crosses the membrane as a helical span at residues 4–24 (TSTCIYHFLVLSWYTFLNYYI). At 25–46 (SQEGKDEVKPKILANGARWKYM) the chain is on the extracellular side. The helical transmembrane segment at 47–67 (TLLNLLLQTIFYGVTCLDDVL) threads the bilayer. Residues 68-85 (KRTKGGKDIKFLTAFRDL) lie on the Cytoplasmic side of the membrane. A helical transmembrane segment spans residues 86 to 106 (LFTTLAFPVSTFVFLAFWILF). At 107 to 119 (LYNRDLIYPKVLD) the chain is on the extracellular side. A helical membrane pass occupies residues 120–140 (TVIPVWLNHAMHTFIFPITLA). Topologically, residues 141–154 (EVVLRPHSYPSKKT) are cytoplasmic. The helical transmembrane segment at 155 to 175 (GLTLLAAASIAYISRILWLYF) threads the bilayer. At 176–189 (ETGTWVYPVFAKLS) the chain is on the extracellular side. The chain crosses the membrane as a helical span at residues 190–210 (LLGLAAFFSLSYVFIASIYLL). At 211–230 (GEKLNHWKWGDMRQPRKKRK) the chain is on the cytoplasmic side.

It belongs to the AIG1 family. Expressed in cultured endothelial cells and in placenta.

The protein localises to the cell membrane. The enzyme catalyses 9-hexadecanoyloxy-octadecanoate + H2O = 9-hydroxy-octadecanoate + hexadecanoate + H(+). It catalyses the reaction 12-hexadecanoyloxy-octadecanoate + H2O = 12-hydroxyoctadecanoate + hexadecanoate + H(+). The catalysed reaction is 9-(9Z-hexadecenoyloxy)-octadecanoate + H2O = (9Z)-hexadecenoate + 9-hydroxy-octadecanoate + H(+). It carries out the reaction 12-(9Z-hexadecenoyloxy)-octadecanoate + H2O = 12-hydroxyoctadecanoate + (9Z)-hexadecenoate + H(+). The enzyme catalyses 13-(9Z-hexadecenoyloxy)-octadecanoate + H2O = 13-hydroxy-octadecanoate + (9Z)-hexadecenoate + H(+). It catalyses the reaction 9-octadecanoyloxy-octadecanoate + H2O = 9-hydroxy-octadecanoate + octadecanoate + H(+). The catalysed reaction is 12-octadecanoyloxy-octadecanoate + H2O = 12-hydroxyoctadecanoate + octadecanoate + H(+). It carries out the reaction 13-octadecanoyloxy-octadecanoate + H2O = 13-hydroxy-octadecanoate + octadecanoate + H(+). The enzyme catalyses 9-(9Z-octadecenoyloxy)-octadecanoate + H2O = 9-hydroxy-octadecanoate + (9Z)-octadecenoate + H(+). It catalyses the reaction 12-(9Z-octadecenoyloxy)-octadecanoate + H2O = 12-hydroxyoctadecanoate + (9Z)-octadecenoate + H(+). The catalysed reaction is 13-(9Z-octadecenoyloxy)-octadecanoate + H2O = 13-hydroxy-octadecanoate + (9Z)-octadecenoate + H(+). It carries out the reaction 5-(9Z-octadecenoyloxy)-octadecanoate + H2O = 5-hydroxy-octadecanoate + (9Z)-octadecenoate + H(+). Its activity is regulated as follows. Inhibited by N-hydroxyhydantoin carbamate JJH260 and beta-lactone KC01. Functionally, hydrolyzes bioactive fatty-acid esters of hydroxy-fatty acids (FAHFAs), but not other major classes of lipids. Show a preference for FAHFAs with branching distal from the carboxylate head group of the lipids. Regulates the expression and the cell-associated anticoagulant activity of the inhibitor TFPI in endothelial cells (in vitro). In Homo sapiens (Human), this protein is Androgen-dependent TFPI-regulating protein (ADTRP).